The sequence spans 137 residues: uncharacterized protein (137 aa).

This is an uncharacterized protein from Bacillus subtilis (strain 168).